Here is a 672-residue protein sequence, read N- to C-terminus: MTPSQVTFEIRGTLLPGEVFAMCGNCDALGNWSPQNAVPLTESETGESVWKAVIVLSRGMSVKYRYFRGCFLEPKTIGGPCQVIVHKWETHLQPRSITPLENEIIIDDGQFGIHNGVETLDSGWLTCQTEIRLRLHFSEKPPVSITKKKFKKSRFRVKLTLEGLEEDDDDDDKASPTVLHKMSNSLEISLISDNEFKCRHSQPECGYGLQPDRWTEYSIQTMEPDNLELIFDFFEEDLSEHVVQGDVLPGHVGTACLLSSTIAESERSAGILTLPIMSRSSRKTIGKVRVDFIIIKPLPGYSCSMQSSFSKYWKPRIPLDVGHRGAGNSTTTAKLAKVQENTIASLRNAASHGAAFVEFDVHLSKDLVPVVYHDLTCCLTMKRKYEADPVELFEIPVKELTFDQLQLLKLSHVTALKTKDQKQCMAEEENSFSENQPFPSLKMVLESLPENVGFNIEIKWICQHRDGVWDGNLSTYFDMNAFLDIILKTVLENSGKRRIVFSSFDADICTMVRQKQNKYPILFLTQGKSDIYPELMDLRSRTTPIAMSFAQFENILGINAHTEDLLRNPSYVQEAKDKGLVIFCWGDDTNDPENRRKLKEFGVNGLIYDRIYDWMPEQPNIFQVEQLERLKRELPELKNCLCPTVSHFIPPSFCMESKIHVDANGIDNVENA.

In terms of domain architecture, CBM20 spans 1-113 (MTPSQVTFEI…IIIDDGQFGI (113 aa)). Residues Arg68 and 86–87 (HK) each bind substrate. Phosphoserine is present on Ser175. The GP-PDE domain occupies 318-618 (PLDVGHRGAG…DRIYDWMPEQ (301 aa)). Tyr608 bears the Phosphotyrosine mark.

Belongs to the glycerophosphoryl diester phosphodiesterase family.

The protein localises to the cytoplasm. Its subcellular location is the cytosol. The enzyme catalyses sn-glycerol 3-phosphocholine + H2O = sn-glycerol 3-phosphate + choline + H(+). May be involved in the negative regulation of skeletal muscle differentiation, independently of its glycerophosphocholine phosphodiesterase activity. This Rattus norvegicus (Rat) protein is Glycerophosphocholine phosphodiesterase GPCPD1 (Gpcpd1).